The sequence spans 325 residues: Protease HtpX homolog (325 aa).

Residues 20–40 (IGYLLGGGGGMMIALVIAVAM) traverse the membrane as a helical segment. H130 is a Zn(2+) binding site. The active site involves E131. H134 contributes to the Zn(2+) binding site. 2 helical membrane-spanning segments follow: residues 145–165 (IVAT…FLGG) and 173–193 (VMGV…AMIV). E202 provides a ligand contact to Zn(2+). The segment at 286–325 (SAAMTARAAAPSQNSGPWGQRSDNAGGNSNGGSRYRGPWS) is disordered. Over residues 306–325 (RSDNAGGNSNGGSRYRGPWS) the composition is skewed to low complexity.

This sequence belongs to the peptidase M48B family. Zn(2+) is required as a cofactor.

The protein resides in the cell inner membrane. This Brucella melitensis biotype 2 (strain ATCC 23457) protein is Protease HtpX homolog.